The chain runs to 369 residues: N-methyltransferase imqF (369 aa).

It belongs to the methyltransferase superfamily.

It functions in the pathway secondary metabolite biosynthesis. N-methyltransferase; part of the gene cluster that mediates the biosynthesis of imizoquins A to D, tripeptide-derived alkaloids that serve a protective role against oxidative stress that are essential for normal germination. ImqB is a canonical three-module NRPS that assembles the tripeptide backbone of the imizoquins via condensation of Trp, Tyr, and Leu-derived precursors. N-methylation by imqF and phenol oxidation by imqC, followed by cyclization via the FAD-dependent oxidase imqH carry out the three-step transformation of L-tyrosine into tetrahydroisoquinoline. Importantly, this sequence requires the presence of a free amine in the tyrosine moiety, indicating that isoquinoline formation occurs prior to peptide bond formation. The imidazolidin-4-one ring of imizoquins could form following additional oxidation of the methyl-derived bridgehead carbon by imqH. Lastly, O-methylation by imqG and leucine hydroxylation by imqE complete biosynthesis of the imizoquins. The protein is N-methyltransferase imqF of Aspergillus flavus (strain ATCC 200026 / FGSC A1120 / IAM 13836 / NRRL 3357 / JCM 12722 / SRRC 167).